The chain runs to 322 residues: Cytochrome c biogenesis protein CcsA (322 aa).

7 helical membrane-spanning segments follow: residues 9 to 29, 44 to 64, 71 to 91, 143 to 163, 226 to 246, 255 to 275, and 287 to 307; these read IFTH…LITL, GMIV…IYSG, LYES…VPYF, MILS…LLVI, VISL…VWAN, WDPK…YLHI, and AIVA…VNLL.

The protein belongs to the CcmF/CycK/Ccl1/NrfE/CcsA family. May interact with Ccs1.

It is found in the plastid. The protein resides in the chloroplast thylakoid membrane. In terms of biological role, required during biogenesis of c-type cytochromes (cytochrome c6 and cytochrome f) at the step of heme attachment. The protein is Cytochrome c biogenesis protein CcsA of Lactuca sativa (Garden lettuce).